The chain runs to 239 residues: SkfA peptide export ATP-binding protein SkfE (239 aa).

One can recognise an ABC transporter domain in the interval 4–232; the sequence is MQVQNLSKCY…AEWRKEVIRL (229 aa). Residue 36-43 coordinates ATP; that stretch reads GPNGAGKT.

The protein belongs to the ABC transporter superfamily. SkfA peptide export (TC 3.A.1.128.1) family.

It is found in the cell membrane. The enzyme catalyses sulfate(out) + ATP + H2O = sulfate(in) + ADP + phosphate + H(+). It catalyses the reaction thiosulfate(out) + ATP + H2O = thiosulfate(in) + ADP + phosphate + H(+). Probably part of the ABC transporter SkfEF involved in the export of the bacteriocin SKF. Probably responsible for energy coupling to the transport system. The polypeptide is SkfA peptide export ATP-binding protein SkfE (Bacillus subtilis (strain 168)).